The chain runs to 449 residues: MAEGGQAQQQPPQLGPGAAARGMKRESEVELPVPGAGADGPEPGLSKRPRTEEAADGGMQNEPLTPGYHGFPARDGQGNQEPTTTPDAMVQPFTTIPFPPPPQNGIPTEYGVPHTQDYAGQTSEHNLTLYGSTQPHGEQSSNSPSNQNGSLTQTEGGAQTDGQQSQTQSSENSESKSTPKRLHVSNIPFRFRDPDLRQMFGQFGKILDVEIIFNERGSKGFGFVTFENSADADRAREKLHGTVVEGRKIEVNNATARVMTNKKMVTPYANGWKLSPVVGAVYGPELYAASSFQADVSLGNEAAVPLSGRGGINTYIPLISLPLVPGFPYPTAATTAAAFRGAHLRGRGRTVYGAVRAVPPTAIPAYPGVVYQDGFYGADLYGGYAAYRYAQPATATAATAAAAAAAAYSDGYGRVYTADPYHALAPAASYGVGAVASLYRGGYSRFAPY.

Residues 1 to 21 (MAEGGQAQQQPPQLGPGAAAR) show a composition bias toward low complexity. The disordered stretch occupies residues 1-186 (MAEGGQAQQQ…STPKRLHVSN (186 aa)). 2 stretches are compositionally biased toward polar residues: residues 77–86 (QGNQEPTTTP) and 118–138 (YAGQ…PHGE). Residues 139–176 (QSSNSPSNQNGSLTQTEGGAQTDGQQSQTQSSENSESK) are compositionally biased toward low complexity. Residues 180-256 (KRLHVSNIPF…RKIEVNNATA (77 aa)) enclose the RRM domain. Arginine 236, glycine 241, tyrosine 268, and lysine 273 each carry omega-N-methylarginine. An asymmetric dimethylarginine mark is found at glutamate 285 and proline 317. 5 positions are modified to omega-N-methylarginine: leucine 318, leucine 323, alanine 336, arginine 340, and glycine 341. An asymmetric dimethylarginine mark is found at arginine 356 and arginine 388. Asymmetric dimethylarginine; alternate occurs at positions 440 and 445. An omega-N-methylarginine; alternate mark is found at arginine 440 and arginine 445.

As to quaternary structure, interacts with ER-alpha N-terminal activation domain. Interacts with RBPMS; the interaction allows cooperative assembly of stable cell-specific alternative splicing regulatory complexes. As to expression, detected in brain neurons (at protein level). Detected in heart, brain, embryo, lung, liver, kidney and ovary.

Its subcellular location is the nucleus. It is found in the cytoplasm. Its function is as follows. RNA-binding protein that regulates alternative splicing events by binding to 5'-UGCAUGU-3' elements. Prevents binding of U2AF2 to the 3'-splice site. Regulates alternative splicing of tissue-specific exons and of differentially spliced exons during erythropoiesis. Seems to act as a coregulatory factor of ER-alpha. Together with RNA binding proteins RBPMS and MBNL1/2, activates vascular smooth muscle cells alternative splicing events. The protein is RNA binding protein fox-1 homolog 2 (Rbfox2) of Mus musculus (Mouse).